Consider the following 465-residue polypeptide: Ribulose bisphosphate carboxylase large chain (465 aa).

At K4 the chain carries N6,N6,N6-trimethyllysine. Residues X113 and T163 each contribute to the substrate site. K165 acts as the Proton acceptor in catalysis. K167 is a substrate binding site. Residues K191, D193, and E194 each coordinate Mg(2+). N6-carboxylysine is present on K191. H284 (proton acceptor) is an active-site residue. Substrate contacts are provided by R285, H317, and S369.

Belongs to the RuBisCO large chain family. Type I subfamily. In terms of assembly, heterohexadecamer of 8 large chains and 8 small chains; disulfide-linked. The disulfide link is formed within the large subunit homodimers. It depends on Mg(2+) as a cofactor. Post-translationally, the disulfide bond which can form in the large chain dimeric partners within the hexadecamer appears to be associated with oxidative stress and protein turnover.

The protein localises to the plastid. Its subcellular location is the chloroplast. It carries out the reaction 2 (2R)-3-phosphoglycerate + 2 H(+) = D-ribulose 1,5-bisphosphate + CO2 + H2O. It catalyses the reaction D-ribulose 1,5-bisphosphate + O2 = 2-phosphoglycolate + (2R)-3-phosphoglycerate + 2 H(+). RuBisCO catalyzes two reactions: the carboxylation of D-ribulose 1,5-bisphosphate, the primary event in carbon dioxide fixation, as well as the oxidative fragmentation of the pentose substrate in the photorespiration process. Both reactions occur simultaneously and in competition at the same active site. The sequence is that of Ribulose bisphosphate carboxylase large chain from Cornus obliqua (Silky dogwood).